The primary structure comprises 251 residues: Xylose/arabinose import ATP-binding protein XylG (251 aa).

The region spanning 5–241 (LEIRDVHKSF…EITEVMTSFA (237 aa)) is the ABC transporter domain. An ATP-binding site is contributed by 37–44 (GDNGAGKS).

This sequence belongs to the ABC transporter superfamily. In terms of assembly, the complex is composed of two ATP-binding proteins (XylG), two transmembrane proteins (XylH) and a solute-binding protein (XylF).

It is found in the cell membrane. The enzyme catalyses D-xylose(out) + ATP + H2O = D-xylose(in) + ADP + phosphate + H(+). It carries out the reaction L-arabinose(out) + ATP + H2O = L-arabinose(in) + ADP + phosphate + H(+). Part of the ABC transporter complex XylFGH involved in the uptake of xylose and arabinose. Responsible for energy coupling to the transport system. This is Xylose/arabinose import ATP-binding protein XylG from Sulfolobus acidocaldarius (strain ATCC 33909 / DSM 639 / JCM 8929 / NBRC 15157 / NCIMB 11770).